We begin with the raw amino-acid sequence, 82 residues long: Small ribosomal subunit protein bS20 (82 aa).

Basic residues predominate over residues 1–11 (MANHKSALKRI). Residues 1–20 (MANHKSALKRIRSNETKRLR) are disordered.

Belongs to the bacterial ribosomal protein bS20 family.

Binds directly to 16S ribosomal RNA. This Christiangramia forsetii (strain DSM 17595 / CGMCC 1.15422 / KT0803) (Gramella forsetii) protein is Small ribosomal subunit protein bS20.